The chain runs to 213 residues: Pyridoxine/pyridoxamine 5'-phosphate oxidase (213 aa).

Residues 8-11 (RQEY) and K66 each bind substrate. FMN contacts are provided by residues 61 to 66 (RTVLLK), 76 to 77 (YT), R82, K83, and Q105. Substrate is bound by residues Y123, R127, and S131. FMN is bound by residues 140–141 (QS) and W185. 191 to 193 (RLH) is a substrate binding site. An FMN-binding site is contributed by R195.

This sequence belongs to the pyridoxamine 5'-phosphate oxidase family. In terms of assembly, homodimer. FMN is required as a cofactor.

The enzyme catalyses pyridoxamine 5'-phosphate + O2 + H2O = pyridoxal 5'-phosphate + H2O2 + NH4(+). The catalysed reaction is pyridoxine 5'-phosphate + O2 = pyridoxal 5'-phosphate + H2O2. Its pathway is cofactor metabolism; pyridoxal 5'-phosphate salvage; pyridoxal 5'-phosphate from pyridoxamine 5'-phosphate: step 1/1. It participates in cofactor metabolism; pyridoxal 5'-phosphate salvage; pyridoxal 5'-phosphate from pyridoxine 5'-phosphate: step 1/1. Functionally, catalyzes the oxidation of either pyridoxine 5'-phosphate (PNP) or pyridoxamine 5'-phosphate (PMP) into pyridoxal 5'-phosphate (PLP). The chain is Pyridoxine/pyridoxamine 5'-phosphate oxidase from Bacteroides thetaiotaomicron (strain ATCC 29148 / DSM 2079 / JCM 5827 / CCUG 10774 / NCTC 10582 / VPI-5482 / E50).